A 483-amino-acid polypeptide reads, in one-letter code: 3-isopropylmalate dehydratase large subunit (483 aa).

[4Fe-4S] cluster contacts are provided by Cys361, Cys424, and Cys427.

It belongs to the aconitase/IPM isomerase family. LeuC type 1 subfamily. As to quaternary structure, heterodimer of LeuC and LeuD. [4Fe-4S] cluster is required as a cofactor.

It carries out the reaction (2R,3S)-3-isopropylmalate = (2S)-2-isopropylmalate. It participates in amino-acid biosynthesis; L-leucine biosynthesis; L-leucine from 3-methyl-2-oxobutanoate: step 2/4. Functionally, catalyzes the isomerization between 2-isopropylmalate and 3-isopropylmalate, via the formation of 2-isopropylmaleate. This chain is 3-isopropylmalate dehydratase large subunit, found in Polaromonas naphthalenivorans (strain CJ2).